We begin with the raw amino-acid sequence, 212 residues long: Probable nicotinate-nucleotide adenylyltransferase (212 aa).

It belongs to the NadD family.

The catalysed reaction is nicotinate beta-D-ribonucleotide + ATP + H(+) = deamido-NAD(+) + diphosphate. The protein operates within cofactor biosynthesis; NAD(+) biosynthesis; deamido-NAD(+) from nicotinate D-ribonucleotide: step 1/1. Functionally, catalyzes the reversible adenylation of nicotinate mononucleotide (NaMN) to nicotinic acid adenine dinucleotide (NaAD). The polypeptide is Probable nicotinate-nucleotide adenylyltransferase (Shewanella sp. (strain ANA-3)).